The following is a 436-amino-acid chain: Glutamyl-tRNA reductase (436 aa).

Substrate-binding positions include 56-59 (TCNR), Ser114, 119-121 (EAQ), and Gln125. The active-site Nucleophile is Cys57. 194-199 (GAGEMI) is an NADP(+) binding site.

The protein belongs to the glutamyl-tRNA reductase family. Homodimer.

It carries out the reaction (S)-4-amino-5-oxopentanoate + tRNA(Glu) + NADP(+) = L-glutamyl-tRNA(Glu) + NADPH + H(+). Its pathway is porphyrin-containing compound metabolism; protoporphyrin-IX biosynthesis; 5-aminolevulinate from L-glutamyl-tRNA(Glu): step 1/2. Catalyzes the NADPH-dependent reduction of glutamyl-tRNA(Glu) to glutamate 1-semialdehyde (GSA). This Acidovorax sp. (strain JS42) protein is Glutamyl-tRNA reductase.